The chain runs to 51 residues: MFSTLAKYLAVKLLTETFIKRVCLATAKHLANKSENTLDNELIDALEDALN.

This is an uncharacterized protein from Pseudoalteromonas espejiana (Bacteriophage PM2).